Consider the following 508-residue polypeptide: Cobyric acid synthase (508 aa).

In terms of domain architecture, GATase cobBQ-type spans 249–451 (EVDVAIINLP…IHGIFENSLF (203 aa)). The Nucleophile role is filled by cysteine 330. Histidine 443 is an active-site residue.

Belongs to the CobB/CobQ family. CobQ subfamily.

It functions in the pathway cofactor biosynthesis; adenosylcobalamin biosynthesis. In terms of biological role, catalyzes amidations at positions B, D, E, and G on adenosylcobyrinic A,C-diamide. NH(2) groups are provided by glutamine, and one molecule of ATP is hydrogenolyzed for each amidation. The sequence is that of Cobyric acid synthase from Caldanaerobacter subterraneus subsp. tengcongensis (strain DSM 15242 / JCM 11007 / NBRC 100824 / MB4) (Thermoanaerobacter tengcongensis).